A 78-amino-acid polypeptide reads, in one-letter code: Holin (78 aa).

Over 1-6 the chain is Cytoplasmic; it reads MNSKID. Residues 7–23 traverse the membrane as a helical segment; sequence SAIPFIGSLTALISGYS. The Periplasmic segment spans residues 24–29; it reads LHEWAS. A helical transmembrane segment spans residues 30-46; sequence LFGILFGAVSVWIAYRK. At 47–78 the chain is on the cytoplasmic side; that stretch reads YKEDVQARKDELAYKMLVAKIEAKKLGIAIDE.

The protein resides in the host cell inner membrane. Accumulates harmlessly in the cytoplasmic membrane until it reaches a critical concentration that triggers the formation of nanometer-scale pores (pinholes) causing host cell membrane depolarization and endolysin refolding and release into the periplasmic space. Once the pinholin has permeabilized the host cell membrane, the SAR-endolysin is released into the periplasm and breaks down the peptidoglycan layer. Determines the precise timing of host cell lysis. Participates with the SAR-endolysin and the U-spanin protein in the sequential events which lead to the programmed host cell lysis releasing the mature viral particles from the host cell. The chain is Holin (hol) from Haemophilus influenzae (Bacteriophage HP1).